The chain runs to 313 residues: Ribosomal RNA small subunit methyltransferase H (313 aa).

S-adenosyl-L-methionine is bound by residues 35–37, D55, F79, D101, and Q108; that span reads GGH.

The protein belongs to the methyltransferase superfamily. RsmH family.

The protein resides in the cytoplasm. It catalyses the reaction cytidine(1402) in 16S rRNA + S-adenosyl-L-methionine = N(4)-methylcytidine(1402) in 16S rRNA + S-adenosyl-L-homocysteine + H(+). Its function is as follows. Specifically methylates the N4 position of cytidine in position 1402 (C1402) of 16S rRNA. The protein is Ribosomal RNA small subunit methyltransferase H of Salmonella newport (strain SL254).